Consider the following 128-residue polypeptide: UPF0325 protein YaeH (128 aa).

The protein belongs to the UPF0325 family.

The chain is UPF0325 protein YaeH from Escherichia fergusonii (strain ATCC 35469 / DSM 13698 / CCUG 18766 / IAM 14443 / JCM 21226 / LMG 7866 / NBRC 102419 / NCTC 12128 / CDC 0568-73).